We begin with the raw amino-acid sequence, 150 residues long: Large ribosomal subunit protein bL9 (150 aa).

Belongs to the bacterial ribosomal protein bL9 family.

In terms of biological role, binds to the 23S rRNA. The chain is Large ribosomal subunit protein bL9 from Streptococcus pyogenes serotype M18 (strain MGAS8232).